Here is a 240-residue protein sequence, read N- to C-terminus: Proteasome subunit alpha (240 aa).

It belongs to the peptidase T1A family. The 20S proteasome core is composed of 14 alpha and 14 beta subunits that assemble into four stacked heptameric rings, resulting in a barrel-shaped structure. The two inner rings, each composed of seven catalytic beta subunits, are sandwiched by two outer rings, each composed of seven alpha subunits. The catalytic chamber with the active sites is on the inside of the barrel. Has a gated structure, the ends of the cylinder being occluded by the N-termini of the alpha-subunits. Is capped at one or both ends by the proteasome regulatory ATPase, PAN.

It localises to the cytoplasm. With respect to regulation, the formation of the proteasomal ATPase PAN-20S proteasome complex, via the docking of the C-termini of PAN into the intersubunit pockets in the alpha-rings, triggers opening of the gate for substrate entry. Interconversion between the open-gate and close-gate conformations leads to a dynamic regulation of the 20S proteasome proteolysis activity. Component of the proteasome core, a large protease complex with broad specificity involved in protein degradation. The polypeptide is Proteasome subunit alpha (Metallosphaera sedula (strain ATCC 51363 / DSM 5348 / JCM 9185 / NBRC 15509 / TH2)).